Here is a 550-residue protein sequence, read N- to C-terminus: Chaperonin GroEL (550 aa).

ATP contacts are provided by residues 30-33 (TLGP), K51, 87-91 (DGTTT), G415, 479-481 (NAA), and D495. The interval 525–550 (PKDEKSSSELNSAPGNGMGGGMGGMM) is disordered. Positions 540 to 550 (NGMGGGMGGMM) are enriched in gly residues.

This sequence belongs to the chaperonin (HSP60) family. Forms a cylinder of 14 subunits composed of two heptameric rings stacked back-to-back. Interacts with the co-chaperonin GroES.

Its subcellular location is the cytoplasm. It carries out the reaction ATP + H2O + a folded polypeptide = ADP + phosphate + an unfolded polypeptide.. In terms of biological role, together with its co-chaperonin GroES, plays an essential role in assisting protein folding. The GroEL-GroES system forms a nano-cage that allows encapsulation of the non-native substrate proteins and provides a physical environment optimized to promote and accelerate protein folding. The protein is Chaperonin GroEL of Buchnera aphidicola subsp. Cinara cedri (strain Cc).